Consider the following 485-residue polypeptide: Aspartyl/glutamyl-tRNA(Asn/Gln) amidotransferase subunit B (485 aa).

It belongs to the GatB/GatE family. GatB subfamily. In terms of assembly, heterotrimer of A, B and C subunits.

The enzyme catalyses L-glutamyl-tRNA(Gln) + L-glutamine + ATP + H2O = L-glutaminyl-tRNA(Gln) + L-glutamate + ADP + phosphate + H(+). It carries out the reaction L-aspartyl-tRNA(Asn) + L-glutamine + ATP + H2O = L-asparaginyl-tRNA(Asn) + L-glutamate + ADP + phosphate + 2 H(+). In terms of biological role, allows the formation of correctly charged Asn-tRNA(Asn) or Gln-tRNA(Gln) through the transamidation of misacylated Asp-tRNA(Asn) or Glu-tRNA(Gln) in organisms which lack either or both of asparaginyl-tRNA or glutaminyl-tRNA synthetases. The reaction takes place in the presence of glutamine and ATP through an activated phospho-Asp-tRNA(Asn) or phospho-Glu-tRNA(Gln). The protein is Aspartyl/glutamyl-tRNA(Asn/Gln) amidotransferase subunit B of Bordetella avium (strain 197N).